The primary structure comprises 245 residues: Biosynthetic peptidoglycan transglycosylase (245 aa).

Residues 20-42 (VYAGSVFAGAWLATQLFYLAQIA) traverse the membrane as a helical segment.

Belongs to the glycosyltransferase 51 family.

It localises to the cell inner membrane. The catalysed reaction is [GlcNAc-(1-&gt;4)-Mur2Ac(oyl-L-Ala-gamma-D-Glu-L-Lys-D-Ala-D-Ala)](n)-di-trans,octa-cis-undecaprenyl diphosphate + beta-D-GlcNAc-(1-&gt;4)-Mur2Ac(oyl-L-Ala-gamma-D-Glu-L-Lys-D-Ala-D-Ala)-di-trans,octa-cis-undecaprenyl diphosphate = [GlcNAc-(1-&gt;4)-Mur2Ac(oyl-L-Ala-gamma-D-Glu-L-Lys-D-Ala-D-Ala)](n+1)-di-trans,octa-cis-undecaprenyl diphosphate + di-trans,octa-cis-undecaprenyl diphosphate + H(+). It functions in the pathway cell wall biogenesis; peptidoglycan biosynthesis. Peptidoglycan polymerase that catalyzes glycan chain elongation from lipid-linked precursors. The polypeptide is Biosynthetic peptidoglycan transglycosylase (Burkholderia orbicola (strain MC0-3)).